The chain runs to 110 residues: Large ribosomal subunit protein uL22 (110 aa).

The protein belongs to the universal ribosomal protein uL22 family. As to quaternary structure, part of the 50S ribosomal subunit.

In terms of biological role, this protein binds specifically to 23S rRNA; its binding is stimulated by other ribosomal proteins, e.g. L4, L17, and L20. It is important during the early stages of 50S assembly. It makes multiple contacts with different domains of the 23S rRNA in the assembled 50S subunit and ribosome. Its function is as follows. The globular domain of the protein is located near the polypeptide exit tunnel on the outside of the subunit, while an extended beta-hairpin is found that lines the wall of the exit tunnel in the center of the 70S ribosome. This is Large ribosomal subunit protein uL22 from Cellvibrio japonicus (strain Ueda107) (Pseudomonas fluorescens subsp. cellulosa).